The following is a 364-amino-acid chain: Ferrochelatase (364 aa).

Positions 211 and 292 each coordinate Fe cation.

The protein belongs to the ferrochelatase family.

The protein localises to the cytoplasm. It carries out the reaction heme b + 2 H(+) = protoporphyrin IX + Fe(2+). Its pathway is porphyrin-containing compound metabolism; protoheme biosynthesis; protoheme from protoporphyrin-IX: step 1/1. Catalyzes the ferrous insertion into protoporphyrin IX. The sequence is that of Ferrochelatase from Nitrosomonas europaea (strain ATCC 19718 / CIP 103999 / KCTC 2705 / NBRC 14298).